The chain runs to 575 residues: 2-isopropylmalate synthase (575 aa).

A Pyruvate carboxyltransferase domain is found at 31 to 305 (PTWLSTDLRD…APGLDFSDIA (275 aa)). Mg(2+) is bound by residues aspartate 40, histidine 244, histidine 246, and asparagine 280. The interval 437–575 (PVQASPDFSD…RFAGEEQGKG (139 aa)) is regulatory domain.

This sequence belongs to the alpha-IPM synthase/homocitrate synthase family. LeuA type 2 subfamily. As to quaternary structure, homodimer. Mg(2+) serves as cofactor.

It localises to the cytoplasm. The enzyme catalyses 3-methyl-2-oxobutanoate + acetyl-CoA + H2O = (2S)-2-isopropylmalate + CoA + H(+). Its pathway is amino-acid biosynthesis; L-leucine biosynthesis; L-leucine from 3-methyl-2-oxobutanoate: step 1/4. In terms of biological role, catalyzes the condensation of the acetyl group of acetyl-CoA with 3-methyl-2-oxobutanoate (2-ketoisovalerate) to form 3-carboxy-3-hydroxy-4-methylpentanoate (2-isopropylmalate). This Herbaspirillum seropedicae (strain SmR1) protein is 2-isopropylmalate synthase.